The chain runs to 353 residues: Melanin-concentrating hormone receptor 1 (353 aa).

The interval 1–29 (MDLEASLLPTGPNASNTSDGPDNLTSAGS) is disordered. At 1-44 (MDLEASLLPTGPNASNTSDGPDNLTSAGSPPRTGSISYINIIMP) the chain is on the extracellular side. Residues 12-29 (PNASNTSDGPDNLTSAGS) are compositionally biased toward polar residues. N13, N16, and N23 each carry an N-linked (GlcNAc...) asparagine glycan. A helical membrane pass occupies residues 45-67 (SVFGTICLLGIIGNSTVIFAVVK). Over 68-79 (KSKLHWCNNVPD) the chain is Cytoplasmic. Residues 80–102 (IFIINLSVVDLLFLLGMPFMIHQ) traverse the membrane as a helical segment. At 103–116 (LMGNGVWHFGETMC) the chain is on the extracellular side. An intrachain disulfide couples C116 to C194. Residues 117–139 (TLITAMDANSQFTSTYILTAMAI) form a helical membrane-spanning segment. Topologically, residues 140-158 (DRYLATVHPISSTKFRKPS) are cytoplasmic. A helical transmembrane segment spans residues 159-181 (VATLVICLLWALSFISITPVWLY). At 182-209 (ARLIPFPGGAVGCGIRLPNPDTDLYWFT) the chain is on the extracellular side. Residues 210–232 (LYQFFLAFALPFVVITAAYVRIL) traverse the membrane as a helical segment. The Cytoplasmic portion of the chain corresponds to 233–252 (QRMTSSVAPASQRSIRLRTK). Residues 253 to 275 (RVTRTAIAICLVFFVCWAPYYVL) form a helical membrane-spanning segment. Over 276–289 (QLTQLSISRPTLTF) the chain is Extracellular. A helical membrane pass occupies residues 290 to 312 (VYLYNAAISLGYANSCLNPFVYI). At 313–353 (VLCETFRKRLVLSVKPAAQGQLRAVSNAQTADEERTESKGT) the chain is on the cytoplasmic side.

This sequence belongs to the G-protein coupled receptor 1 family. Interacts with NCDN. In terms of tissue distribution, highest level in brain, particularly in the frontal cortex and hypothalamus, lower levels in the liver and heart.

The protein localises to the cell membrane. Functionally, receptor for melanin-concentrating hormone, coupled to both G proteins that inhibit adenylyl cyclase and G proteins that activate phosphoinositide hydrolysis. The polypeptide is Melanin-concentrating hormone receptor 1 (Homo sapiens (Human)).